The following is a 158-amino-acid chain: Phosphopantetheine adenylyltransferase (158 aa).

Residue T10 coordinates substrate. ATP contacts are provided by residues 10-11 (TF) and H18. Substrate contacts are provided by K42, L74, and R88. ATP is bound by residues 89-91 (GLR), E99, and 124-130 (NSFISST).

It belongs to the bacterial CoaD family. Homohexamer. Requires Mg(2+) as cofactor.

It localises to the cytoplasm. The catalysed reaction is (R)-4'-phosphopantetheine + ATP + H(+) = 3'-dephospho-CoA + diphosphate. Its pathway is cofactor biosynthesis; coenzyme A biosynthesis; CoA from (R)-pantothenate: step 4/5. Reversibly transfers an adenylyl group from ATP to 4'-phosphopantetheine, yielding dephospho-CoA (dPCoA) and pyrophosphate. The sequence is that of Phosphopantetheine adenylyltransferase from Shewanella sediminis (strain HAW-EB3).